The primary structure comprises 91 residues: Antifungal protein opdH (91 aa).

The N-terminal stretch at 1-18 (MQFSSLSLVFLAVIGAIA) is a signal peptide. The propeptide occupies 19–33 (NPIAVDSELENRDVQ). Disulfide bonds link cysteine 41/cysteine 69, cysteine 48/cysteine 76, and cysteine 61/cysteine 87.

It belongs to the antifungal protein pafB family.

It localises to the secreted. It is found in the host cytoplasm. Its function is as follows. Antifungal protein; part of the gene cluster that mediates the biosynthesis of oxopyrrolidines, polyketide-amino acid hybrid compounds with feature structures of tetramic acid. Acts as an inhibitor of growth of various molds and yeasts. This Penicillium oxalicum (strain 114-2 / CGMCC 5302) (Penicillium decumbens) protein is Antifungal protein opdH.